The following is a 287-amino-acid chain: SPX domain-containing protein 2 (287 aa).

The region spanning 1 to 162 is the SPX domain; the sequence is MKFGKSLSNQ…GALIRLPFIQ (162 aa). The span at 36 to 50 shows a compositional bias: basic and acidic residues; that stretch reads EPRSVENRPNKRSRS. Disordered regions lie at residues 36–61 and 194–213; these read EPRSVENRPNKRSRSDSNSVDTDPTV and KSRNLDEEGEPTTSGMVKTG.

It is found in the nucleus. May inhibit PHR1 DNA-binding activity in a Pi-dependent manner. The chain is SPX domain-containing protein 2 from Arabidopsis thaliana (Mouse-ear cress).